The following is a 145-amino-acid chain: 3-hydroxyacyl-[acyl-carrier-protein] dehydratase FabZ (145 aa).

H49 is an active-site residue.

This sequence belongs to the thioester dehydratase family. FabZ subfamily.

Its subcellular location is the cytoplasm. The enzyme catalyses a (3R)-hydroxyacyl-[ACP] = a (2E)-enoyl-[ACP] + H2O. In terms of biological role, involved in unsaturated fatty acids biosynthesis. Catalyzes the dehydration of short chain beta-hydroxyacyl-ACPs and long chain saturated and unsaturated beta-hydroxyacyl-ACPs. The sequence is that of 3-hydroxyacyl-[acyl-carrier-protein] dehydratase FabZ from Rickettsia massiliae (strain Mtu5).